Here is a 67-residue protein sequence, read N- to C-terminus: Protein AaeX (67 aa).

Helical transmembrane passes span 3–23 and 43–63; these read LFPV…KLLL and FVWH…YLIS.

Belongs to the AaeX family.

The protein localises to the cell membrane. The chain is Protein AaeX from Salmonella gallinarum (strain 287/91 / NCTC 13346).